The chain runs to 796 residues: Protein translocase subunit SecA 2 (796 aa).

Residues Gln-84, 102 to 106, and Asp-496 contribute to the ATP site; that span reads GEGKT.

The protein belongs to the SecA family. In terms of assembly, monomer and homodimer. Part of the essential Sec protein translocation apparatus which comprises SecA, SecYEG and auxiliary proteins SecDF. Other proteins may also be involved.

Its subcellular location is the cell membrane. It localises to the cytoplasm. The enzyme catalyses ATP + H2O + cellular proteinSide 1 = ADP + phosphate + cellular proteinSide 2.. In terms of biological role, part of the Sec protein translocase complex. Interacts with the SecYEG preprotein conducting channel. Has a central role in coupling the hydrolysis of ATP to the transfer of proteins into and across the cell membrane, serving as an ATP-driven molecular motor driving the stepwise translocation of polypeptide chains across the membrane. The polypeptide is Protein translocase subunit SecA 2 (Staphylococcus haemolyticus (strain JCSC1435)).